A 177-amino-acid chain; its full sequence is Phosphatidylglycerol/phosphatidylinositol transfer protein (177 aa).

The N-terminal stretch at 1–17 is a signal peptide; that stretch reads MRLSAAVIALLSTSAAA. Positions 18-30 are excised as a propeptide; sequence FSVYRENSVSAND.

Belongs to the NPC2 family. As to quaternary structure, monomer.

Functionally, catalyzes the intermembrane transfer of phosphatidylglycerol and phosphatidylinositol. This Neurospora crassa (strain ATCC 24698 / 74-OR23-1A / CBS 708.71 / DSM 1257 / FGSC 987) protein is Phosphatidylglycerol/phosphatidylinositol transfer protein (npc-2).